The sequence spans 401 residues: Shugoshin (401 aa).

A coiled-coil region spans residues 3–49 (SKVEQQYKLLNAELMDQVQKQRLEIGEYRKRVISLEREIMDIREEHV). A disordered region spans residues 82–197 (EPAPAAQINR…VEETQTEQNE (116 aa)). The span at 98-108 (SSREICKDMRR) shows a compositional bias: basic and acidic residues. Over residues 114–137 (RTTRPISPRRSSSVTSTVSSTSRR) the composition is skewed to low complexity. A phosphoserine; by AurB mark is found at Ser124, Ser125, and Ser126. Over residues 171–183 (VFDEDDSDDDFDE) the composition is skewed to acidic residues. Phosphothreonine; by PLK1 is present on Thr331. The segment at 338-401 (EEMPSIRTRS…GSKGKAKAKK (64 aa)) is disordered. The segment covering 348–377 (RTAANKKSENTDMSSSFCNNSARPSRSCRP) has biased composition (polar residues). Over residues 387-401 (NKLRNGSKGKAKAKK) the composition is skewed to basic residues.

Belongs to the shugoshin family. As to quaternary structure, homodimer. Interacts with Incenp. Post-translationally, phosphorylation by polo-like kinase (PLK) on Thr-331 antagonizes cohesive function. Phosphorylation on Thr-331 at the metaphase anaphase transition leads to its dissociation from centromeres. In contrast, phosphorylation by aurB/ial on either Ser-124, Ser-125 or Ser-126 is required for association with centromeres.

It localises to the chromosome. The protein localises to the centromere. Its function is as follows. Plays a central role in chromosome cohesion during meiosis and mitosis by preventing premature dissociation of cohesin complex from centromeres after prophase, when most of cohesin complex dissociates from chromosomes arms. May act by protecting or Rad21 from cleavage by Sse/separase. Required during meiosis in both males and females. In Drosophila melanogaster (Fruit fly), this protein is Shugoshin (mei-S332).